A 371-amino-acid chain; its full sequence is Leucine-rich repeat-containing protein 58 (371 aa).

A Phosphoserine modification is found at Ser-24. LRR repeat units lie at residues 45–66 (ALLR…LGSG), 69–91 (HLQL…LALR), 92–113 (GLRT…PKGL), 121–143 (SLQV…LELR), 144–166 (ALQT…ENLQ), 167–189 (SLEC…GNLP), 190–211 (SLNY…LSQL), 213–234 (SLRS…ILNL), and 236–256 (HLEE…RDLT). Residues 340 to 351 (SSASHSSTSQSE) are compositionally biased toward low complexity. Residues 340–361 (SSASHSSTSQSESDSEDEASVA) form a disordered region.

The polypeptide is Leucine-rich repeat-containing protein 58 (LRRC58) (Homo sapiens (Human)).